A 287-amino-acid polypeptide reads, in one-letter code: MAFLDQHPGLGFPAAAGLGLLIGSFLNVVILRLPKRMEWQWRRDAREILELPDIYEPPPPGIVVEPSHDPVTGDKLKWWENIPLFSWLMLRGKSRYSGKPISIQYPLVELLTSILCVASVWRFGFGWQGFGAIVLSCFLVAMSGIDLRHKLLPDQLTLPLMWLGLVGSMDNLYMPAKPALLGAAVGYVSLWTVWWLFKQLTGKEGMGHGDFKLLAALGAWCGLKGILPIILISSLVGAVLGSIWLFAKGRDRATPIPFGPYLAIAGWVVFFWGNDLVDGYLRFAGLR.

6 helical membrane-spanning segments follow: residues 10–30 (LGFP…NVVI), 101–121 (ISIQ…ASVW), 125–145 (FGWQ…MSGI), 177–197 (KPAL…WWLF), 226–246 (ILPI…IWLF), and 253–273 (ATPI…FFWG).

The protein belongs to the peptidase A24 family.

It is found in the cell inner membrane. The enzyme catalyses Typically cleaves a -Gly-|-Phe- bond to release an N-terminal, basic peptide of 5-8 residues from type IV prepilin, and then N-methylates the new N-terminal amino group, the methyl donor being S-adenosyl-L-methionine.. In terms of biological role, plays an essential role in type IV pili and type II pseudopili formation by proteolytically removing the leader sequence from substrate proteins and subsequently monomethylating the alpha-amino group of the newly exposed N-terminal phenylalanine. The polypeptide is Prepilin leader peptidase/N-methyltransferase (xpsO) (Xanthomonas campestris pv. campestris (strain ATCC 33913 / DSM 3586 / NCPPB 528 / LMG 568 / P 25)).